Reading from the N-terminus, the 185-residue chain is Elongation factor P (185 aa).

It belongs to the elongation factor P family.

The protein resides in the cytoplasm. It participates in protein biosynthesis; polypeptide chain elongation. In terms of biological role, involved in peptide bond synthesis. Stimulates efficient translation and peptide-bond synthesis on native or reconstituted 70S ribosomes in vitro. Probably functions indirectly by altering the affinity of the ribosome for aminoacyl-tRNA, thus increasing their reactivity as acceptors for peptidyl transferase. This chain is Elongation factor P, found in Nostoc punctiforme (strain ATCC 29133 / PCC 73102).